Here is an 81-residue protein sequence, read N- to C-terminus: X antigen family member 1 (81 aa).

A Glycyl lysine isopeptide (Lys-Gly) (interchain with G-Cter in SUMO2) cross-link involves residue Lys12. Ser20 bears the Phosphoserine mark. Glycyl lysine isopeptide (Lys-Gly) (interchain with G-Cter in SUMO2) cross-links involve residues Lys61 and Lys65.

Belongs to the GAGE family. As to expression, in normal tissues, highly expressed in testis. Expressed also in many different types of cancers: highly expressed in breast cancer, prostate cancer and many types of lung cancers, including squamous cell carcinoma, small cell carcinoma, non-small cell carcinoma, and adenocarcinoma, as well as in Ewing's cell lines, in some Ewing's sarcoma patient samples, and in one of one alveolar rhabdomyosarcoma patient sample.

The polypeptide is X antigen family member 1 (Homo sapiens (Human)).